The chain runs to 212 residues: Golgi SNAP receptor complex member 2 (212 aa).

N-acetylmethionine is present on M1. At 1–190 (MDPLFQQTHK…LIEKRAFQDK (190 aa)) the chain is on the cytoplasmic side. Residues 61-107 (NKRQNARLRVDQLKYDVQHLQTALRNFQHRRHAREQQERQREELLSR) are a coiled coil. The short motif at 118-120 (IPM) is the IxM motif; signal for cargo packaging into COPII-coated vesicles element. The chain crosses the membrane as a helical; Anchor for type IV membrane protein span at residues 191–211 (YFMIGGMLLTCVVMFLVVQYL). Residue T212 is a topological domain, vesicular.

It belongs to the GOSR2 family. In terms of assembly, part of a unique SNARE complex composed of the Golgi SNAREs GOSR1, STX5 and YKT6. Interacts (via IxM motif) with SEC24C and SEC24D; mediates GOSR2 packaging into COPII-coated vesicles. Interacts with BET1.

The protein localises to the golgi apparatus. Its subcellular location is the cis-Golgi network membrane. The protein resides in the golgi apparatus membrane. It localises to the endoplasmic reticulum membrane. In terms of biological role, involved in transport of proteins from the cis/medial-Golgi to the trans-Golgi network. The sequence is that of Golgi SNAP receptor complex member 2 (GOSR2) from Homo sapiens (Human).